Reading from the N-terminus, the 720-residue chain is Cyclic nucleotide-gated ion channel 17 (720 aa).

Topologically, residues 1 to 85 (MELRKDKLLM…SEIVLKWNWV (85 aa)) are cytoplasmic. Residues 86–106 (FIVSCMVALFIDPLYFFVPAI) traverse the membrane as a helical segment. Residues 107–121 (GGDKNYPCARTDTSL) lie on the Extracellular side of the membrane. The chain crosses the membrane as a helical span at residues 122–142 (SILVTFFRTIADLFYLLHIFI). Over 143–178 (KFRTGFIAPNSSTRVFGRGELVMDPKAIAWRYIKSD) the chain is Cytoplasmic. The helical transmembrane segment at 179–199 (FIIDLIATLPLPQIVIWFVIS) threads the bilayer. Residues 200–211 (TTKSYRFDHNNN) are Extracellular-facing. The helical transmembrane segment at 212–232 (AIALIVLLQYIPRFYLIIPLS) threads the bilayer. At 233–252 (SQIVKATGVVTKTAWAGAAY) the chain is on the cytoplasmic side. A helical transmembrane segment spans residues 253–273 (NLLLYMLASHVLGAAWYILSV). The Extracellular portion of the chain corresponds to 274-377 (DRYTSCWKSR…LSTTMFMGET (104 aa)). A helical membrane pass occupies residues 378 to 398 (TFAVLIAIFGLVLFAHLIGNM). The Cytoplasmic portion of the chain corresponds to 399–720 (QTYLQSLTVR…EPDFSAEHDD (322 aa)). Residues 481 to 605 (FFSQ…SKKL) and glutamate 552 each bind a nucleoside 3',5'-cyclic phosphate. The segment at 597 to 612 (FRRLHSKKLQHTFRFY) is calmodulin-binding. Residues 617–646 (RTWAACFIQAAWRRYKRRVMENNLTAIESM) form the IQ domain.

This sequence belongs to the cyclic nucleotide-gated cation channel (TC 1.A.1.5) family. Homotetramer or heterotetramer. Part of a functional complex containing PSKR1, BAK1, CNGC17, and AHA. Interacts with AHA1, AHA2, and BAK1, but not with PSKR1 or BRI1.

It localises to the cell membrane. Functionally, probable cyclic nucleotide-gated ion channel. Forms a functional cation-translocating unit with AHAs that is activated by PSKR1/BAK1 and possibly other BAK1/RLK complexes. Required for PSK-induced protoplast expansion. The chain is Cyclic nucleotide-gated ion channel 17 from Arabidopsis thaliana (Mouse-ear cress).